Reading from the N-terminus, the 574-residue chain is Enolase 4 (574 aa).

Over residues 165-175 (EKERRQMEREA) the composition is skewed to basic and acidic residues. The interval 165–221 (EKERRQMEREASPMPLQPEPSPVTSPAPGKKKGSGKGKKAAVVEKPIPPEETPEAVV) is disordered. A compositionally biased stretch (pro residues) spans 179–189 (PLQPEPSPVTS). Basic residues predominate over residues 193–203 (GKKKGSGKGKK). Glu287 is a binding site for substrate. Lys467 acts as the Proton acceptor in catalysis. Lys518 is a binding site for substrate.

It belongs to the enolase family.

It carries out the reaction (2R)-2-phosphoglycerate = phosphoenolpyruvate + H2O. Its pathway is carbohydrate degradation; glycolysis; pyruvate from D-glyceraldehyde 3-phosphate: step 4/5. In Xenopus tropicalis (Western clawed frog), this protein is Enolase 4 (eno4).